Consider the following 1971-residue polypeptide: Germinal-center associated nuclear protein (1971 aa).

2 disordered regions span residues 1–50 (MHPV…KSLA) and 214–406 (PAFA…RGKS). Positions 8 to 29 (GGQQPSAFAVSSSTTGTYQTKS) are enriched in polar residues. Arg32 is subject to Asymmetric dimethylarginine. Residues 33–335 (FGQPSLFGQN…RPRGGTLFGR (303 aa)) are FG-repeats. Composition is skewed to polar residues over residues 38–50 (LFGQNSTPSKSLA) and 214–224 (PAFASPLSNQN). A compositionally biased stretch (low complexity) spans 232–253 (STSAFGSSNSSFSTFPTASPGS). Basic and acidic residues-rich tracts occupy residues 288–321 (RKEDQDRSPRRHCHEAAEDPDPLSRGDHPPDKRP) and 342–359 (KSNKEAGRLGSKESKESG). The interval 414-550 (EEWIYSLGGV…AAGSLLSKSS (137 aa)) is DNA primase. Position 424 is a phosphoserine (Ser424). An N6-acetyllysine mark is found at Lys483 and Lys484. 3 positions are modified to phosphoserine: Ser502, Ser531, and Ser550. Residues 768 to 951 (NNENMTKCLQ…RKSVFIGRKL (184 aa)) form the PCI domain. Residues 1124-1162 (HVAAEEVSMERQRLEEEKQRAEEERLKQERELMLTQLSE) adopt a coiled-coil conformation. Residues 1793–1840 (RELQLSHGRSGMRSIHPPTSTFPTPLLHVHQKGKKKEESGREGSLSTE) form a disordered region.

This sequence belongs to the SAC3 family. In terms of assembly, component of the nuclear pore complex (NPC)-associated TREX-2 complex (transcription and export complex 2), composed of at least GANP, 2 copies of ENY2, PCID2, SEM1/DSS1, and either centrin CETN2 or centrin CETN3. The TREX-2 complex also associates with ALYREF/ALY. Interacts with RNA polymerase II subunit POLR2A and with the transcription elongation factor SUPT5H/SPT5. Interacts (via FG-repeats) with NXF1; this interaction is not mediated by RNA. Interacts with nuclear envelope proteins NUP62, NUP153 and RANBP2/NUP358; interaction with NUP153 is required for full localization at the nuclear pore complex. Interacts with several RNA helicases, including DHX9, DDX21, and DDX39A/DDX39, and with DNA topoisomerase TOP2A. Directly interacts with AICDA/AID. Interacts with the glucocorticoid receptor NR3C1. Interacts with MCM3. Phosphorylation at Ser-502 is induced in B-cells by CD40-stimulation, but not by bacterial lipopolysaccharide (LPS). As to expression, expressed at low levels in lymphoid organs, including thymus, spleen and lymph nodes. Up-regulated in stimulated B-cells in spleen and Peyer's patch germinal centers (at protein level).

The protein localises to the cytoplasm. The protein resides in the nucleus. It is found in the nucleus envelope. It localises to the nuclear pore complex. Its subcellular location is the nucleoplasm. The protein localises to the chromosome. The catalysed reaction is L-lysyl-[histone] + acetyl-CoA = N(6)-acetyl-L-lysyl-[histone] + CoA + H(+). Functionally, as a component of the TREX-2 complex, involved in the export of mRNAs to the cytoplasm through the nuclear pores. Through the acetylation of histones, affects the assembly of nucleosomes at immunoglobulin variable region genes and promotes the recruitment and positioning of transcription complex to favor DNA cytosine deaminase AICDA/AID targeting, hence promoting somatic hypermutations. The sequence is that of Germinal-center associated nuclear protein (Mcm3ap) from Mus musculus (Mouse).